A 1522-amino-acid polypeptide reads, in one-letter code: Lysophospholipase NTE1 (1522 aa).

The Lumenal portion of the chain corresponds to 1 to 73 (MVDGTYVNSS…SLLVYLINGT (73 aa)). A helical transmembrane segment spans residues 74-94 (VPFYLVVLGSVFTPIIVYLIL). Over 95 to 1522 (RSRVLSAYSR…IHLLHRRNSI (1428 aa)) the chain is Cytoplasmic. Disordered stretches follow at residues 443-468 (SVQE…TPNK), 485-523 (DLLS…ASSP), and 535-556 (SQNF…PSVV). 2 stretches are compositionally biased toward low complexity: residues 498 to 511 (KTAS…PRIS) and 540 to 555 (PLSS…KPSV). A nucleoside 3',5'-cyclic phosphate-binding positions include 661–782 (PINV…LTKL) and 778–918 (TLTK…VAHK). Disordered stretches follow at residues 828 to 852 (QKSK…DNQP) and 1125 to 1145 (SSQN…GAPP). The region spanning 1219–1383 (LVLGGGGARG…LDNLPVLEMK (165 aa)) is the PNPLA domain. The short motif at 1223–1228 (GGGARG) is the GXGXXG element. Positions 1250–1254 (GTSIG) match the GXSXG motif. Catalysis depends on Ser1252, which acts as the Nucleophile. Asp1370 serves as the catalytic Proton acceptor. Positions 1370-1372 (DGG) match the DGA/G motif.

This sequence belongs to the NTE family.

It is found in the endoplasmic reticulum membrane. The enzyme catalyses a 1-acyl-sn-glycero-3-phosphocholine + H2O = sn-glycerol 3-phosphocholine + a fatty acid + H(+). With respect to regulation, inhibited by organophosphorus esters. Intracellular phospholipase B that catalyzes the double deacylation of phosphatidylcholine (PC) to glycerophosphocholine (GroPCho). Plays an important role in membrane lipid homeostasis. Responsible for the rapid PC turnover in response to inositol, elevated temperatures, or when choline is present in the growth medium. The polypeptide is Lysophospholipase NTE1 (NTE1) (Eremothecium gossypii (strain ATCC 10895 / CBS 109.51 / FGSC 9923 / NRRL Y-1056) (Yeast)).